Reading from the N-terminus, the 500-residue chain is Glycogen synthase (500 aa).

Lysine 15 provides a ligand contact to ADP-alpha-D-glucose.

It belongs to the glycosyltransferase 1 family. Bacterial/plant glycogen synthase subfamily.

It catalyses the reaction [(1-&gt;4)-alpha-D-glucosyl](n) + ADP-alpha-D-glucose = [(1-&gt;4)-alpha-D-glucosyl](n+1) + ADP + H(+). It functions in the pathway glycan biosynthesis; glycogen biosynthesis. Functionally, synthesizes alpha-1,4-glucan chains using ADP-glucose. The polypeptide is Glycogen synthase (Protochlamydia amoebophila (strain UWE25)).